A 370-amino-acid polypeptide reads, in one-letter code: 3-isopropylmalate dehydrogenase (370 aa).

77–90 (GPKWDGVPYDARPE) serves as a coordination point for NAD(+). Substrate is bound by residues R97, R107, R135, and D226. 3 residues coordinate Mg(2+): D226, D250, and D254. Residue 290–302 (GSAPDIAGKGMAN) participates in NAD(+) binding.

Belongs to the isocitrate and isopropylmalate dehydrogenases family. LeuB type 1 subfamily. As to quaternary structure, homodimer. Requires Mg(2+) as cofactor. Mn(2+) is required as a cofactor.

The protein localises to the cytoplasm. It catalyses the reaction (2R,3S)-3-isopropylmalate + NAD(+) = 4-methyl-2-oxopentanoate + CO2 + NADH. The protein operates within amino-acid biosynthesis; L-leucine biosynthesis; L-leucine from 3-methyl-2-oxobutanoate: step 3/4. In terms of biological role, catalyzes the oxidation of 3-carboxy-2-hydroxy-4-methylpentanoate (3-isopropylmalate) to 3-carboxy-4-methyl-2-oxopentanoate. The product decarboxylates to 4-methyl-2 oxopentanoate. The protein is 3-isopropylmalate dehydrogenase of Rhodopseudomonas palustris (strain ATCC BAA-98 / CGA009).